The following is a 316-amino-acid chain: Aquaglyceroporin-2 (316 aa).

The interval 1–31 (MADERGPINKSGPSSTYGATENNGESGGTRG) is disordered. At 1-59 (MADERGPINKSGPSSTYGATENNGESGGTRGAPATEDVIVIQDSGWYYIKFRFKEPFAE) the chain is on the cytoplasmic side. Residues 11–24 (SGPSSTYGATENNG) are compositionally biased toward polar residues. The helical transmembrane segment at 60–80 (FLGTFILVAFGVGAIAQTVLS) threads the bilayer. The Extracellular segment spans residues 81-86 (KGATGN). Residues 87-107 (WITIALGFGLGLALGIAVSGH) traverse the membrane as a helical segment. Residues 108-131 (YSGGHLNPAVTITLAIYRKFPWVK) are Cytoplasmic-facing. An NPA 1 motif is present at residues 114–116 (NPA). A helical transmembrane segment spans residues 132 to 152 (VPVYITAQVLGAFVAAAVIYL). The Extracellular portion of the chain corresponds to 153–187 (NYLPAIYNFAGDKRDVIGANATAGIFATYPQPFMS). N172 carries an N-linked (GlcNAc...) asparagine glycan. Residues 188-208 (IGGAFFSEALGTFFLLFVILA) traverse the membrane as a helical segment. At 209-219 (MTDERNVPTTR) the chain is on the cytoplasmic side. Residues 220 to 240 (IVAPITIGLTLTAIAISLGFE) form a helical membrane-spanning segment. Over 241 to 271 (TGFSLNAARDFGPRLFTFFIGYGVEVFTAYK) the chain is Extracellular. Residues 246-248 (NAA) carry the NPA 2 motif. Residues 272–292 (FYFWIPLVAPIVGGLVAGFVY) form a helical membrane-spanning segment. Over 293–316 (DSLLYWGEKSFLNKNVHHEHRAVA) the chain is Cytoplasmic.

The protein belongs to the MIP/aquaporin (TC 1.A.8) family.

The protein resides in the cell membrane. Its subcellular location is the membrane. The enzyme catalyses H2O(in) = H2O(out). It catalyses the reaction glycerol(in) = glycerol(out). Its activity is regulated as follows. Polyethylene glycol (PEG) stimulates whereas glycerol inhibits the aquaporin activity. Its function is as follows. Water channel required to facilitate the transport of water across membranes. Stimulates plant drought tolerance by facilitating the transport of water from the arbuscular mycorrhiza fungus to host plants. This is Aquaglyceroporin-2 from Rhizophagus irregularis (Arbuscular mycorrhizal fungus).